The primary structure comprises 553 residues: Cysteine desulfurase IscS (553 aa).

The span at 102 to 122 (NNISSNNTQYNNNSSNSGSLN) shows a compositional bias: low complexity. Residues 102-125 (NNISSNNTQYNNNSSNSGSLNDEG) form a disordered region.

This sequence belongs to the class-V pyridoxal-phosphate-dependent aminotransferase family. NifS/IscS subfamily. In terms of assembly, homotetramer. Interacts with Isd11; the interaction enhances cysteine desulfurase activity of IscS. Interacts with IscU. Component of a complex, at least composed of IscS, Isd11 and IscU. It depends on pyridoxal 5'-phosphate as a cofactor.

The protein resides in the mitochondrion. The catalysed reaction is (sulfur carrier)-H + L-cysteine = (sulfur carrier)-SH + L-alanine. Its pathway is cofactor biosynthesis; iron-sulfur cluster biosynthesis. Catalyzes sulfur activation and mobilization in iron-sulfur cluster formation (ISC) pathway for iron-sulfur (Fe-S) cluster biogenesis. Active when in complex with a partner protein Isd11. The protein is Cysteine desulfurase IscS of Plasmodium falciparum (isolate 3D7).